A 286-amino-acid chain; its full sequence is Putative L-ribulose-5-phosphate 3-epimerase SgbU (286 aa).

It belongs to the L-ribulose-5-phosphate 3-epimerase family.

The enzyme catalyses L-ribulose 5-phosphate = L-xylulose 5-phosphate. Its function is as follows. Catalyzes the isomerization of L-xylulose-5-phosphate to L-ribulose-5-phosphate (Potential). May be involved in the utilization of 2,3-diketo-L-gulonate. The sequence is that of Putative L-ribulose-5-phosphate 3-epimerase SgbU (sgbU) from Escherichia coli (strain K12).